Here is a 157-residue protein sequence, read N- to C-terminus: RNA pyrophosphohydrolase (157 aa).

A Nudix hydrolase domain is found at Ser6–Asp149. Residues Gly43–Gly64 carry the Nudix box motif.

Belongs to the Nudix hydrolase family. RppH subfamily. A divalent metal cation serves as cofactor.

Accelerates the degradation of transcripts by removing pyrophosphate from the 5'-end of triphosphorylated RNA, leading to a more labile monophosphorylated state that can stimulate subsequent ribonuclease cleavage. The sequence is that of RNA pyrophosphohydrolase from Sulfurovum sp. (strain NBC37-1).